The chain runs to 363 residues: Probable transglycosylase BTH_I0986 (363 aa).

Belongs to the glycosyltransferase group 1 family. Glycosyltransferase 4 subfamily.

Its function is as follows. Probably a transglycosylase. Probably involved in synthesis of the outer membrane receptor for a cellular contact-dependent growth inhibition (CDI) system. The chain is Probable transglycosylase BTH_I0986 from Burkholderia thailandensis (strain ATCC 700388 / DSM 13276 / CCUG 48851 / CIP 106301 / E264).